We begin with the raw amino-acid sequence, 162 residues long: UPF0178 protein RSKD131_2223 (162 aa).

The protein belongs to the UPF0178 family.

The sequence is that of UPF0178 protein RSKD131_2223 from Cereibacter sphaeroides (strain KD131 / KCTC 12085) (Rhodobacter sphaeroides).